We begin with the raw amino-acid sequence, 193 residues long: MAKAKARRRVRDTWKEKSWYTIKTPVNFEDKEIGETPARDPDYLIGRGVEVTMRELSGDFSKQYIKLRFEIDNVAGDVANTKFTGHKTTTDYVRSMIRRGTSRIDASSVVKTKDDRKVKLHVLAVTTRRAKSSQQKYMRQVINDLLAETAAEKSFDELIKLVVNGKLASEVYHNAKKIYPLKRVEIIKSKVLN.

Belongs to the eukaryotic ribosomal protein eS1 family.

In Methanobrevibacter smithii (strain ATCC 35061 / DSM 861 / OCM 144 / PS), this protein is Small ribosomal subunit protein eS1.